We begin with the raw amino-acid sequence, 197 residues long: Protein GrpE (197 aa).

Residues 1 to 41 (MSSKEQKTPEGQAPEEIITEQHEEVEAVEPDASAEQVDPRD) form a disordered region.

It belongs to the GrpE family. In terms of assembly, homodimer.

The protein resides in the cytoplasm. Its function is as follows. Participates actively in the response to hyperosmotic and heat shock by preventing the aggregation of stress-denatured proteins, in association with DnaK and GrpE. It is the nucleotide exchange factor for DnaK and may function as a thermosensor. Unfolded proteins bind initially to DnaJ; upon interaction with the DnaJ-bound protein, DnaK hydrolyzes its bound ATP, resulting in the formation of a stable complex. GrpE releases ADP from DnaK; ATP binding to DnaK triggers the release of the substrate protein, thus completing the reaction cycle. Several rounds of ATP-dependent interactions between DnaJ, DnaK and GrpE are required for fully efficient folding. The sequence is that of Protein GrpE from Enterobacter sp. (strain 638).